Here is a 229-residue protein sequence, read N- to C-terminus: 2-C-methyl-D-erythritol 4-phosphate cytidylyltransferase (229 aa).

The protein belongs to the IspD/TarI cytidylyltransferase family. IspD subfamily.

The enzyme catalyses 2-C-methyl-D-erythritol 4-phosphate + CTP + H(+) = 4-CDP-2-C-methyl-D-erythritol + diphosphate. It functions in the pathway isoprenoid biosynthesis; isopentenyl diphosphate biosynthesis via DXP pathway; isopentenyl diphosphate from 1-deoxy-D-xylulose 5-phosphate: step 2/6. Its function is as follows. Catalyzes the formation of 4-diphosphocytidyl-2-C-methyl-D-erythritol from CTP and 2-C-methyl-D-erythritol 4-phosphate (MEP). The chain is 2-C-methyl-D-erythritol 4-phosphate cytidylyltransferase from Neisseria meningitidis serogroup C (strain 053442).